The sequence spans 209 residues: MDQQKIPQATAKRLPLYYRFIQNLSLSGKQRVSSAELSEAVKVDSATIRRDFSYFGALGKKGYGYNVNYLLSFFRETLDQDDITRVALIGVGNLGTAFLHYNFTKNNNTKIEMAFDVDEEKVGKEIGGIPVYHLDELEERLTNDIQVAILTVPANVAQAVADRLAYTSVHGILNFTPARLNVSEKIRIHHIDLAVELQTLVYFLKNYPQ.

A DNA-binding region (H-T-H motif) is located at residues 16-55; that stretch reads LYYRFIQNLSLSGKQRVSSAELSEAVKVDSATIRRDFSYF. 90 to 95 contacts NAD(+); the sequence is GVGNLG.

The protein belongs to the transcriptional regulatory Rex family. As to quaternary structure, homodimer.

The protein localises to the cytoplasm. Functionally, modulates transcription in response to changes in cellular NADH/NAD(+) redox state. This is Redox-sensing transcriptional repressor Rex from Bacillus cytotoxicus (strain DSM 22905 / CIP 110041 / 391-98 / NVH 391-98).